The following is a 226-amino-acid chain: Translation initiation factor IF-3 (226 aa).

Residues 195 to 226 (FVPLAPLSPEDLIEEPELESESDSDAEPESDN) are disordered. Residues 205-226 (DLIEEPELESESDSDAEPESDN) show a composition bias toward acidic residues.

Belongs to the IF-3 family. Monomer.

It is found in the cytoplasm. Its function is as follows. IF-3 binds to the 30S ribosomal subunit and shifts the equilibrium between 70S ribosomes and their 50S and 30S subunits in favor of the free subunits, thus enhancing the availability of 30S subunits on which protein synthesis initiation begins. The sequence is that of Translation initiation factor IF-3 from Chlorobium chlorochromatii (strain CaD3).